We begin with the raw amino-acid sequence, 596 residues long: Cytochrome P450 monooxygenase FUM15 (596 aa).

The segment at 476–512 is disordered; sequence DRWLSPKNGNREATEQSKFKIGNQKRDSTAAPEVTQE. A compositionally biased stretch (basic and acidic residues) spans 484–503; the sequence is GNREATEQSKFKIGNQKRDS. Cys536 is a binding site for heme.

The protein belongs to the cytochrome P450 family. It depends on heme as a cofactor.

It is found in the endoplasmic reticulum. The protein operates within secondary metabolite biosynthesis. In terms of biological role, cytochrome P450 monooxygenase; part of the gene cluster that mediates the biosynthesis of fumonisins B1 (FB1), B2 (FB2), B3 (FB3), and B4 (FB4), which are carcinogenic mycotoxins. Within the pathway, FUM15 may be responsible for the hydroxylations at positions C-14 and/or C-15. Also plays a role in self-protection from FB1 toxicity, probably through derivatization of FB1, and may contribute to ceramide biosynthesis. The biosynthesis starts with the FUM1-catalyzed carbon chain assembly from one molecule of acetyl-CoA, eight molecules of malonyl-CoA, and two molecules of methionine (in S-adenosyl form). The C18 polyketide chain is released from the enzyme by a nucleophilic attack of a carbanion, which is derived from R-carbon of alanine by decarboxylation, on the carbonyl carbon of polyketide acyl chain. This step is catalyzed by the pyridoxal 5'-phosphate-dependent aminoacyl transferase FUM8. The resultant 3-keto intermediate is then stereospecifically reduced to a 3-hydroxyl product by reductase FUM13. Subsequent oxidations at C-10 by the cytochrome P450 monooxygenase FUM2, C-14 and C-15 by FUM6, FUM12 or FUM15, tricarballylic esterification of the hydroxyl groups on C-14 and C-15 by acyltransferase FUM14, and C-5 hydroxylation by 2-keto-glutarate-dependent dioxygenase FUM3 furnish the biosynthesis of fumonisins. The tricarballylic moieties are most likely derived from the citric acid cycle, and their addition to the carbon backbone may involve FUM7, FUM10, FUM11 and FUM14. The protein is Cytochrome P450 monooxygenase FUM15 of Gibberella moniliformis (strain M3125 / FGSC 7600) (Maize ear and stalk rot fungus).